The primary structure comprises 446 residues: Questin oxidase (446 aa).

The protein belongs to the questin oxidase family.

It catalyses the reaction questin + NADPH + O2 = demethylsulochrin + NADP(+). Its pathway is secondary metabolite biosynthesis. Questin oxidase; part of the gene cluster that mediates the biosynthesis of geodin, an intermediate in the biosynthesis of other natural products. The pathway begins with the synthesis of atrochrysone thioester by the polyketide synthase (PKS) gedC. The atrochrysone carboxyl ACP thioesterase gedB then breaks the thioester bond and releases the atrochrysone carboxylic acid from gedC. The atrochrysone carboxylic acid is then converted to atrochrysone which is further transformed into emodinanthrone. The next step is performed by the emodinanthrone oxygenase gedH that catalyzes the oxidation of emodinanthrone to emodin. Emodin O-methyltransferase encoded probably by gedA then catalyzes methylation of the 8-hydroxy group of emodin to form questin. Ring cleavage of questin by questin oxidase gedK leads to desmethylsulochrin via several intermediates including questin epoxide. Another methylation step probably catalyzed by methyltransferase gedG leads to the formation of sulochrin which is further converted to dihydrogeodin by the sulochrin halogenase gedL. Finally, the dihydrogeodin oxidase gedJ catalyzes the stereospecific phenol oxidative coupling reaction converting dihydrogeodin to geodin. This chain is Questin oxidase, found in Aspergillus terreus (strain NIH 2624 / FGSC A1156).